Here is a 662-residue protein sequence, read N- to C-terminus: Potassium channel KAT3 (662 aa).

At 1–90 (MSTTTTEARS…HFDRRYRLWE (90 aa)) the chain is on the cytoplasmic side. The helical transmembrane segment at 91–111 (LFLVILVGYSAWASLFELAFE) threads the bilayer. Topologically, residues 112 to 118 (KAAEGAL) are extracellular. The chain crosses the membrane as a helical span at residues 119–139 (LTIDLVVDFFFAVDIILTFFV). Residues 140–163 (SYLDNTTYLNVTDHKLIAKRYLKS) are Cytoplasmic-facing. Residues 164–184 (VAFVMDVASTLPIQFIYKTIT) form a helical membrane-spanning segment. At 185–194 (GDVGRGQAFG) the chain is on the extracellular side. Residues 195–215 (FLNLLRLWRLRRVAELFKRLE) traverse the membrane as a helical; Voltage-sensor segment. Over 216-229 (KDAHFNYFVIRVIK) the chain is Cytoplasmic. Residues 230–250 (LLCVTIFWIHLAGCILYWIAY) form a helical membrane-spanning segment. Residues 251 to 277 (HYPRPTDTWIGSQVEDFKERSVWLGYT) lie on the Extracellular side of the membrane. Positions 278-297 (YSMYWSIVTLTTVGYGDLHA) form an intramembrane region, pore-forming. Residues 298 to 301 (VNSR) are Extracellular-facing. A helical membrane pass occupies residues 302–322 (EKTFNMFYMLFNIGLTSYIIG). Residues 323 to 662 (IMTNLVVHGA…LRENDHLYIF (340 aa)) lie on the Cytoplasmic side of the membrane. 406–527 (LFKGFPEGLL…MIIANFMTYL (122 aa)) serves as a coordination point for a nucleoside 3',5'-cyclic phosphate. Residues 528 to 558 (KGLNDELKKEIPFLRDLLDDADAQVQETVQS) adopt a coiled-coil conformation. A KHA domain is found at 591–662 (RVIIHGQAPP…LRENDHLYIF (72 aa)).

This sequence belongs to the potassium channel family. Plant (TC 1.A.1.4) subfamily. In terms of assembly, the potassium channel is probably composed of a homo- or heterotetrameric complex of pore-forming subunits. May interact with AKT1 and AKT2. Interacts with SLAC1. In terms of tissue distribution, expressed predominantly in root hairs and root endodermis and, at a lower level, in leaf nodes, trichomes, and hydathodes.

The protein resides in the membrane. In terms of biological role, probable modulatory (alpha) subunit of inward-rectifying potassium channels. Could mediate potassium uptake from the soil solution by plant roots in association with AKT1. In Arabidopsis thaliana (Mouse-ear cress), this protein is Potassium channel KAT3 (KAT3).